The primary structure comprises 1226 residues: DNA-directed RNA polymerase subunit beta (1226 aa).

It belongs to the RNA polymerase beta chain family. The RNAP catalytic core consists of 2 alpha, 1 beta, 1 beta' and 1 omega subunit. When a sigma factor is associated with the core the holoenzyme is formed, which can initiate transcription.

The catalysed reaction is RNA(n) + a ribonucleoside 5'-triphosphate = RNA(n+1) + diphosphate. Its function is as follows. DNA-dependent RNA polymerase catalyzes the transcription of DNA into RNA using the four ribonucleoside triphosphates as substrates. This Leptospira borgpetersenii serovar Hardjo-bovis (strain JB197) protein is DNA-directed RNA polymerase subunit beta.